Reading from the N-terminus, the 408-residue chain is Peptidase T (408 aa).

H78 is a binding site for Zn(2+). Residue D80 is part of the active site. A Zn(2+)-binding site is contributed by D140. The active-site Proton acceptor is the E174. Zn(2+) is bound by residues E175, D197, and H379.

Belongs to the peptidase M20B family. It depends on Zn(2+) as a cofactor.

The protein localises to the cytoplasm. It catalyses the reaction Release of the N-terminal residue from a tripeptide.. In terms of biological role, cleaves the N-terminal amino acid of tripeptides. This chain is Peptidase T, found in Staphylococcus aureus (strain Mu3 / ATCC 700698).